A 589-amino-acid polypeptide reads, in one-letter code: UvrABC system protein C (589 aa).

Residues glutamate 10–isoleucine 87 enclose the GIY-YIG domain. Residues serine 197 to isoleucine 232 enclose the UVR domain.

It belongs to the UvrC family. As to quaternary structure, interacts with UvrB in an incision complex.

The protein localises to the cytoplasm. In terms of biological role, the UvrABC repair system catalyzes the recognition and processing of DNA lesions. UvrC both incises the 5' and 3' sides of the lesion. The N-terminal half is responsible for the 3' incision and the C-terminal half is responsible for the 5' incision. This chain is UvrABC system protein C, found in Fusobacterium nucleatum subsp. nucleatum (strain ATCC 25586 / DSM 15643 / BCRC 10681 / CIP 101130 / JCM 8532 / KCTC 2640 / LMG 13131 / VPI 4355).